A 1755-amino-acid chain; its full sequence is Transposon Ty1-LR2 Gag-Pol polyprotein (1755 aa).

3 stretches are compositionally biased toward polar residues: residues 1-23 (MESQ…SVTS), 48-60 (TKAN…TPAS), and 127-152 (QSQF…GNTF). 3 disordered regions span residues 1–93 (MESQ…MMTQ), 126–174 (PQSQ…PPPM), and 352–421 (GSRN…SKST). Positions 153–165 (TDSSSADSDMTST) are enriched in low complexity. Positions 299 to 401 (NNGIHINNKV…NSKSKTARAH (103 aa)) are RNA-binding. Residues 402-418 (NVSTSNNSPSTDNDSIS) show a composition bias toward low complexity. Ser416 is modified (phosphoserine). The For protease activity; shared with dimeric partner role is filled by Asp461. The tract at residues 583–640 (NVHTSESTRKYPYPFIHRMLAHANAPTIRYSLKNNTITYFNESDVDWSSAIDYQCPDC) is integrase-type zinc finger-like. Residues 660–835 (NSYEPFQYLH…AGLDISTLLP (176 aa)) enclose the Integrase catalytic domain. Residues Asp671 and Asp736 each contribute to the Mg(2+) site. Disordered regions lie at residues 956-1087 (SKAV…ETEK), 1092-1111 (RSPS…NIVP), and 1130-1187 (DLPL…DNET). Positions 960-969 (SPTDSTPPST) are enriched in low complexity. Positions 1005–1015 (STPQISNIEST) are enriched in polar residues. Residues 1038 to 1053 (ESSHASKSKDFRHSDS) are compositionally biased toward basic and acidic residues. Composition is skewed to polar residues over residues 1054-1082 (YSEN…QISD) and 1101-1111 (PENNSSHNIVP). The Bipartite nuclear localization signal motif lies at 1178–1212 (KKRSLEDNETEIKVSRDTWNTKNMRSLEPPRSKKR). The 139-residue stretch at 1338–1476 (NNYYITQLDI…DILGLEIKYQ (139 aa)) folds into the Reverse transcriptase Ty1/copia-type domain. Mg(2+) contacts are provided by Asp1346, Asp1427, Asp1428, Asp1610, Glu1652, and Asp1685. The RNase H Ty1/copia-type domain occupies 1610–1752 (DASYGNQPYY…IKTFKLLTNK (143 aa)).

In terms of assembly, the capsid protein forms a homotrimer, from which the VLPs are assembled. The protease is a homodimer, whose active site consists of two apposed aspartic acid residues. Initially, virus-like particles (VLPs) are composed of the structural unprocessed proteins Gag and Gag-Pol, and also contain the host initiator methionine tRNA (tRNA(i)-Met) which serves as a primer for minus-strand DNA synthesis, and a dimer of genomic Ty RNA. Processing of the polyproteins occurs within the particle and proceeds by an ordered pathway, called maturation. First, the protease (PR) is released by autocatalytic cleavage of the Gag-Pol polyprotein yielding capsid protein p45 and a Pol-p154 precursor protein. This cleavage is a prerequisite for subsequent processing of Pol-p154 at the remaining sites to release the mature structural and catalytic proteins. Maturation takes place prior to the RT reaction and is required to produce transposition-competent VLPs.

It is found in the cytoplasm. The protein resides in the nucleus. The enzyme catalyses DNA(n) + a 2'-deoxyribonucleoside 5'-triphosphate = DNA(n+1) + diphosphate. It carries out the reaction Endonucleolytic cleavage to 5'-phosphomonoester.. Capsid protein (CA) is the structural component of the virus-like particle (VLP), forming the shell that encapsulates the retrotransposons dimeric RNA genome. The particles are assembled from trimer-clustered units and there are holes in the capsid shells that allow for the diffusion of macromolecules. CA also has nucleocapsid-like chaperone activity, promoting primer tRNA(i)-Met annealing to the multipartite primer-binding site (PBS), dimerization of Ty1 RNA and initiation of reverse transcription. Functionally, the aspartyl protease (PR) mediates the proteolytic cleavages of the Gag and Gag-Pol polyproteins after assembly of the VLP. Its function is as follows. Reverse transcriptase/ribonuclease H (RT) is a multifunctional enzyme that catalyzes the conversion of the retro-elements RNA genome into dsDNA within the VLP. The enzyme displays a DNA polymerase activity that can copy either DNA or RNA templates, and a ribonuclease H (RNase H) activity that cleaves the RNA strand of RNA-DNA heteroduplexes during plus-strand synthesis and hydrolyzes RNA primers. The conversion leads to a linear dsDNA copy of the retrotransposon that includes long terminal repeats (LTRs) at both ends. In terms of biological role, integrase (IN) targets the VLP to the nucleus, where a subparticle preintegration complex (PIC) containing at least integrase and the newly synthesized dsDNA copy of the retrotransposon must transit the nuclear membrane. Once in the nucleus, integrase performs the integration of the dsDNA into the host genome. This is Transposon Ty1-LR2 Gag-Pol polyprotein (TY1B-LR2) from Saccharomyces cerevisiae (strain ATCC 204508 / S288c) (Baker's yeast).